The primary structure comprises 250 residues: ATP synthase subunit a (250 aa).

6 helical membrane passes run 27 to 47 (FTNA…FLTF), 85 to 105 (FFPL…VGLI), 115 to 135 (LIVT…YGFV), 141 to 161 (FLHL…LVVI), 181 to 201 (MLAG…LASA), and 223 to 243 (ELLV…IYLN).

It belongs to the ATPase A chain family. F-type ATPases have 2 components, CF(1) - the catalytic core - and CF(0) - the membrane proton channel. CF(1) has five subunits: alpha(3), beta(3), gamma(1), delta(1), epsilon(1). CF(0) has three main subunits: a(1), b(2) and c(9-12). The alpha and beta chains form an alternating ring which encloses part of the gamma chain. CF(1) is attached to CF(0) by a central stalk formed by the gamma and epsilon chains, while a peripheral stalk is formed by the delta and b chains.

The protein resides in the cell inner membrane. Key component of the proton channel; it plays a direct role in the translocation of protons across the membrane. This Xanthobacter autotrophicus (strain ATCC BAA-1158 / Py2) protein is ATP synthase subunit a.